Consider the following 159-residue polypeptide: 6,7-dimethyl-8-ribityllumazine synthase (159 aa).

Residues Trp-26, 58 to 60, and 80 to 82 each bind 5-amino-6-(D-ribitylamino)uracil; these read AIE and VVI. (2S)-2-hydroxy-3-oxobutyl phosphate is bound at residue 85 to 86; it reads ET. His-88 serves as the catalytic Proton donor. Asn-113 contacts 5-amino-6-(D-ribitylamino)uracil. A (2S)-2-hydroxy-3-oxobutyl phosphate-binding site is contributed by Arg-127.

It belongs to the DMRL synthase family. In terms of assembly, homopentamer.

It carries out the reaction (2S)-2-hydroxy-3-oxobutyl phosphate + 5-amino-6-(D-ribitylamino)uracil = 6,7-dimethyl-8-(1-D-ribityl)lumazine + phosphate + 2 H2O + H(+). It functions in the pathway cofactor biosynthesis; riboflavin biosynthesis; riboflavin from 2-hydroxy-3-oxobutyl phosphate and 5-amino-6-(D-ribitylamino)uracil: step 1/2. Functionally, catalyzes the formation of 6,7-dimethyl-8-ribityllumazine by condensation of 5-amino-6-(D-ribitylamino)uracil with 3,4-dihydroxy-2-butanone 4-phosphate. This is the penultimate step in the biosynthesis of riboflavin. The chain is 6,7-dimethyl-8-ribityllumazine synthase from Mycolicibacterium gilvum (strain PYR-GCK) (Mycobacterium gilvum (strain PYR-GCK)).